The primary structure comprises 194 residues: Imidazoleglycerol-phosphate dehydratase (194 aa).

Belongs to the imidazoleglycerol-phosphate dehydratase family.

It localises to the cytoplasm. It catalyses the reaction D-erythro-1-(imidazol-4-yl)glycerol 3-phosphate = 3-(imidazol-4-yl)-2-oxopropyl phosphate + H2O. It participates in amino-acid biosynthesis; L-histidine biosynthesis; L-histidine from 5-phospho-alpha-D-ribose 1-diphosphate: step 6/9. The chain is Imidazoleglycerol-phosphate dehydratase from Caldanaerobacter subterraneus subsp. tengcongensis (strain DSM 15242 / JCM 11007 / NBRC 100824 / MB4) (Thermoanaerobacter tengcongensis).